We begin with the raw amino-acid sequence, 510 residues long: Leucine-rich repeat-containing protein 14B (510 aa).

The stretch at 100–137 (SNRLRVADFTGIQDVQVQQCPCGRALGRWGRTKVLART) is one LRR 1; degenerate repeat. Residues 181–205 (QVCCPSLRADSLSPGQLLQVLGLAG) form an LRR 2; degenerate repeat. An LRR 4; degenerate repeat occupies 234–273 (FPQLTSLTLPTKAFDAPPTCAPDPEGEDLLLTSIAWELSQ). 5 LRR repeats span residues 274–298 (MNQLTELSVAFSTLTGKIQTLLSPL), 299–330 (KTPLRVLDLANCALNHEDISFLADCNHTAHLE), 331–349 (VLDLSGHNLVHLYPSTFFR), 355–382 (AQTLRVLTLEECNITDSHVNMMILGLSP), and 383–407 (CSQLQQFKFLGNPLSGSALRRLFAA).

This sequence belongs to the PRAME family. LRRC14 subfamily.

In Mus musculus (Mouse), this protein is Leucine-rich repeat-containing protein 14B.